Consider the following 483-residue polypeptide: Glutamate--tRNA ligase (483 aa).

The short motif at proline 9–asparagine 19 is the 'HIGH' region element. The 'KMSKS' region motif lies at lysine 253–arginine 257. ATP is bound at residue lysine 256.

This sequence belongs to the class-I aminoacyl-tRNA synthetase family. Glutamate--tRNA ligase type 1 subfamily. As to quaternary structure, monomer.

It is found in the cytoplasm. The catalysed reaction is tRNA(Glu) + L-glutamate + ATP = L-glutamyl-tRNA(Glu) + AMP + diphosphate. Functionally, catalyzes the attachment of glutamate to tRNA(Glu) in a two-step reaction: glutamate is first activated by ATP to form Glu-AMP and then transferred to the acceptor end of tRNA(Glu). In Mycoplasma mycoides subsp. mycoides SC (strain CCUG 32753 / NCTC 10114 / PG1), this protein is Glutamate--tRNA ligase.